The chain runs to 198 residues: Peptidyl-tRNA hydrolase (198 aa).

Tyr-14 serves as a coordination point for tRNA. His-19 serves as the catalytic Proton acceptor. TRNA is bound by residues Tyr-64, Asn-66, and Asn-113.

The protein belongs to the PTH family. In terms of assembly, monomer.

The protein localises to the cytoplasm. It catalyses the reaction an N-acyl-L-alpha-aminoacyl-tRNA + H2O = an N-acyl-L-amino acid + a tRNA + H(+). Its function is as follows. Hydrolyzes ribosome-free peptidyl-tRNAs (with 1 or more amino acids incorporated), which drop off the ribosome during protein synthesis, or as a result of ribosome stalling. In terms of biological role, catalyzes the release of premature peptidyl moieties from peptidyl-tRNA molecules trapped in stalled 50S ribosomal subunits, and thus maintains levels of free tRNAs and 50S ribosomes. In Acidobacterium capsulatum (strain ATCC 51196 / DSM 11244 / BCRC 80197 / JCM 7670 / NBRC 15755 / NCIMB 13165 / 161), this protein is Peptidyl-tRNA hydrolase.